Reading from the N-terminus, the 245-residue chain is Probable membrane transporter protein YdhB (245 aa).

A run of 8 helical transmembrane segments spans residues 1–21 (MLIILVMFLLGIILGFIGAGG), 34–56 (HIPIHTALGTSLAGMAFTSLSGA), 71–91 (LIVGGFAAVGSFFGAKLTSFI), 98–118 (YLTAGMLFLSAILILIRLFIL), 137–157 (ILGIAAGVLSGTFGIGSAPFI), 177–197 (MLVIIPLAVGGGIGYITEGFV), 199–219 (YVLLVKVLVGTMCGAYVGAKF), and 225–245 (KVVLKSAIFLTPAIAGLLLLF).

Belongs to the 4-toluene sulfonate uptake permease (TSUP) (TC 2.A.102) family.

The protein resides in the cell membrane. The polypeptide is Probable membrane transporter protein YdhB (ydhB) (Bacillus subtilis (strain 168)).